A 158-amino-acid polypeptide reads, in one-letter code: MGIEGILEKGFVTTSIDTVVNWSRTGSLWPMTFGLACCAVEMMHAGAARYDLDRFGLLFRPSPRQSDLMIVAGTLVNKMAPALRKVYDQMPEPRWVVSMGSCANGGGYYHYSYSVVRGCDRIVPVDIYVPGCPPTAEALIFGLIQLQKKIRRTNTIAR.

4 residues coordinate [4Fe-4S] cluster: Cys37, Cys38, Cys102, and Cys132.

It belongs to the complex I 20 kDa subunit family. As to quaternary structure, NDH-1 is composed of 14 different subunits. Subunits NuoB, C, D, E, F, and G constitute the peripheral sector of the complex. [4Fe-4S] cluster serves as cofactor.

It is found in the cell inner membrane. It carries out the reaction a quinone + NADH + 5 H(+)(in) = a quinol + NAD(+) + 4 H(+)(out). NDH-1 shuttles electrons from NADH, via FMN and iron-sulfur (Fe-S) centers, to quinones in the respiratory chain. The immediate electron acceptor for the enzyme in this species is believed to be ubiquinone. Couples the redox reaction to proton translocation (for every two electrons transferred, four hydrogen ions are translocated across the cytoplasmic membrane), and thus conserves the redox energy in a proton gradient. The protein is NADH-quinone oxidoreductase subunit B of Acidithiobacillus ferrooxidans (strain ATCC 23270 / DSM 14882 / CIP 104768 / NCIMB 8455) (Ferrobacillus ferrooxidans (strain ATCC 23270)).